The chain runs to 75 residues: Small ribosomal subunit protein bS18 (75 aa).

This sequence belongs to the bacterial ribosomal protein bS18 family. In terms of assembly, part of the 30S ribosomal subunit. Forms a tight heterodimer with protein bS6.

Functionally, binds as a heterodimer with protein bS6 to the central domain of the 16S rRNA, where it helps stabilize the platform of the 30S subunit. This is Small ribosomal subunit protein bS18 from Histophilus somni (strain 129Pt) (Haemophilus somnus).